A 540-amino-acid chain; its full sequence is MLO protein homolog 1 (540 aa).

Residues 1 to 16 (MAGGRSGSRELPETPT) are Extracellular-facing. Residues 17–37 (WAVAVVCAVLVLVSAAMEHGL) form a helical membrane-spanning segment. Over 38–60 (HNLSHWFRRRQKKAMGDALDKIK) the chain is Cytoplasmic. A helical membrane pass occupies residues 61–81 (AELMLLGFISLLLTVAQAPIS). The Extracellular segment spans residues 82–142 (KICIPKSAAN…MSAKSMHQLH (61 aa)). The helical transmembrane segment at 143-163 (IFIFVLAVFHVTYCIITMGLG) threads the bilayer. The Cytoplasmic portion of the chain corresponds to 164–265 (RLKMKKWKKW…IKRSLEDDFK (102 aa)). A helical transmembrane segment spans residues 266–286 (VVVGISLPLWFVGILVLFLDI). H287 is a topological domain (extracellular). A helical transmembrane segment spans residues 288-308 (GLGTLIWISFVPLIIVLLVGT). The Cytoplasmic portion of the chain corresponds to 309–347 (KLEMVIMEMAQEIQDRATVIQGAPMVEPSNKYFWFNRPD). A helical membrane pass occupies residues 348-368 (WVLFFIHLTLFHNAFQMAHFV). Residues 369-383 (WTMATPGLKKCFHEN) lie on the Extracellular side of the membrane. The chain crosses the membrane as a helical span at residues 384 to 404 (IWLSIVEVIVGISLQVLCSYI). Topologically, residues 405 to 540 (TFPLYALVTQ…DSDFSFSAQR (136 aa)) are cytoplasmic. Residues 426–447 (EQTMKALMNWRKKAMEKKKVRD) form a calmodulin-binding region. Residues 468–526 (ASPVHLLQDHRARSDDPPSPITVASPPAPEEDMYPVPAAAASRQLLDDPPDRRWMASSS) are disordered. 2 stretches are compositionally biased toward basic and acidic residues: residues 474–483 (LQDHRARSDD) and 512–521 (LLDDPPDRRW).

This sequence belongs to the MLO family.

It is found in the membrane. Its function is as follows. May be involved in modulation of pathogen defense and leaf cell death. Activity seems to be regulated by Ca(2+)-dependent calmodulin binding and seems not to require heterotrimeric G proteins. The protein is MLO protein homolog 1 (MLO1) of Oryza sativa subsp. indica (Rice).